We begin with the raw amino-acid sequence, 600 residues long: Adenine deaminase 3 (600 aa).

The protein belongs to the metallo-dependent hydrolases superfamily. Adenine deaminase family. Mn(2+) is required as a cofactor.

It carries out the reaction adenine + H2O + H(+) = hypoxanthine + NH4(+). This is Adenine deaminase 3 from Rhizobium johnstonii (strain DSM 114642 / LMG 32736 / 3841) (Rhizobium leguminosarum bv. viciae).